Reading from the N-terminus, the 163-residue chain is Phosphopantetheine adenylyltransferase (163 aa).

Serine 9 serves as a coordination point for substrate. Residues serine 9–phenylalanine 10 and histidine 17 contribute to the ATP site. Residues lysine 41, isoleucine 75, and arginine 89 each contribute to the substrate site. ATP is bound by residues glycine 90–arginine 92, glutamate 100, and histidine 125–aspartate 131.

It belongs to the bacterial CoaD family. Homohexamer. It depends on Mg(2+) as a cofactor.

It is found in the cytoplasm. It catalyses the reaction (R)-4'-phosphopantetheine + ATP + H(+) = 3'-dephospho-CoA + diphosphate. The protein operates within cofactor biosynthesis; coenzyme A biosynthesis; CoA from (R)-pantothenate: step 4/5. Reversibly transfers an adenylyl group from ATP to 4'-phosphopantetheine, yielding dephospho-CoA (dPCoA) and pyrophosphate. The protein is Phosphopantetheine adenylyltransferase of Borreliella burgdorferi (strain ZS7) (Borrelia burgdorferi).